The primary structure comprises 75 residues: UPF0346 protein LJ_1103 (75 aa).

It belongs to the UPF0346 family.

In Lactobacillus johnsonii (strain CNCM I-12250 / La1 / NCC 533), this protein is UPF0346 protein LJ_1103.